The following is a 156-amino-acid chain: Small ribosomal subunit protein uS7 (156 aa).

This sequence belongs to the universal ribosomal protein uS7 family. Part of the 30S ribosomal subunit. Contacts proteins S9 and S11.

In terms of biological role, one of the primary rRNA binding proteins, it binds directly to 16S rRNA where it nucleates assembly of the head domain of the 30S subunit. Is located at the subunit interface close to the decoding center, probably blocks exit of the E-site tRNA. The sequence is that of Small ribosomal subunit protein uS7 from Acinetobacter baumannii (strain AB307-0294).